Here is a 603-residue protein sequence, read N- to C-terminus: MEGSDFLLAGVLFLFAAVAAVPLASRLGIGAVLGYLLAGIAIGPWGLGFISDVDEILHFSELGVVFLMFIIGLELNPSKLWQLRRSIFGVGAAQVLLSAALLAGLLMLTDFAWQAAVVGGIGLAMSSTAMALQLMREKGMNRSESGQLGFSVLLFQDLAVIPALALVPLLAGSADEHFDWMKIGMKVLAFVGMLIGGRYLLRPVFRFIAASGVREVFTAATLLLVLGSALFMDALGLSMALGTFIAGVLLAESEYRHELETAIDPFKGLLLGLFFISVGMSLNLGVLYTHLLWVVISVVVLVAVKILVLYLLARLYGVRSSERMQFAGVLSQGGEFAFVLFSTASSQRLFQGDQMALLLVTVTVTLSMMTTPLLMKLVDKWLSRQFNGPEEEDEKPWVNDDKPQVIVVGFGRFGQVIGRLLMANKMRITVLERDISAVNLMRKYGYKVYYGDATQVDLLRSAGAEAAESIVITCNEPEDTMKLVEICQQHFPHLHILARARGRVEAHELLQAGVTQFSRETFSSALELGRKTLVTLGMHPHQAQRAQLHFRRLDMRMLRELIPMHADTVQISRAREARRELEEIFQREMQQERRQLDGWDEFE.

13 helical membrane-spanning segments follow: residues 4–24 (SDFL…VPLA), 29–49 (IGAV…GLGF), 55–75 (EILH…GLEL), 87–107 (IFGV…GLLM), 115–135 (AAVV…LQLM), 152–172 (VLLF…LLAG), 177–197 (HFDW…LIGG), 207–227 (FIAA…LVLG), 230–250 (LFMD…GVLL), 268–288 (GLLL…GVLY), 291–311 (LLWV…VLYL), 324–344 (MQFA…FSTA), and 355–375 (MALL…PLLM). Positions 402 to 521 (KPQVIVVGFG…AGVTQFSRET (120 aa)) constitute an RCK N-terminal domain.

It belongs to the monovalent cation:proton antiporter 2 (CPA2) transporter (TC 2.A.37) family. KefB subfamily. In terms of assembly, interacts with the regulatory subunit KefG.

Its subcellular location is the cell inner membrane. In terms of biological role, pore-forming subunit of a potassium efflux system that confers protection against electrophiles. Catalyzes K(+)/H(+) antiport. In Shigella boydii serotype 4 (strain Sb227), this protein is Glutathione-regulated potassium-efflux system protein KefB.